The sequence spans 556 residues: Formate--tetrahydrofolate ligase (556 aa).

65–72 (TPAGEGKS) contacts ATP.

The protein belongs to the formate--tetrahydrofolate ligase family.

The enzyme catalyses (6S)-5,6,7,8-tetrahydrofolate + formate + ATP = (6R)-10-formyltetrahydrofolate + ADP + phosphate. Its pathway is one-carbon metabolism; tetrahydrofolate interconversion. In Clostridium novyi (strain NT), this protein is Formate--tetrahydrofolate ligase.